The chain runs to 232 residues: Homeobox protein Rhox13 (232 aa).

The interval 45-114 (QAAVASSHDS…EAAAPSVAAV (70 aa)) is disordered. Residues 68-105 (SDSESESDSESESDSSDSSDESDDDSSTSDEDTSDPEE) are compositionally biased toward acidic residues. The homeobox DNA-binding region spans 148–207 (RRGPPFHFAQWQVEEMESLFEETQYPDLLTRGELARTLNVPEVKVKVWFTNRRAKQRKIE).

It belongs to the paired-like homeobox family.

The protein localises to the nucleus. In terms of biological role, probable transcription factor. This chain is Homeobox protein Rhox13, found in Mus musculus (Mouse).